Consider the following 232-residue polypeptide: Lipoarabinomannan carrier protein LprG (232 aa).

The N-terminal stretch at Met-1–Gly-21 is a signal peptide. Cys-22 carries the N-palmitoyl cysteine lipid modification. Cys-22 is lipidated: S-diacylglycerol cysteine.

Belongs to the LppX/LprAFG lipoprotein family. Modified by Lgt on Cys-22 with an S-linked diacylglyceral, signal peptide is removed by LspA, Cys-22 is further modifed with a fatty acid on its amino group by Lnt yielding a triacylated protein.

It is found in the cell inner membrane. Its function is as follows. Helps membrane protein MHAS_02168/C731_2106 (P55) transport triacylglycerides (TAG) across the inner cell membrane into the periplasm and probably ultimately to the outer membrane. Binds TAG in its hydrophobic cavity and transfers it between lipid bilayers. TAG probably regulates lipid metabolism and growth regulation and plays a structural role in the outer membrane. Also binds mannosides, lipoarabinomannan and lipomannan and various glycolipids in the same cavity. The lprG-MHAS_02167/C731_2107 operon complements the vancomycin sensitivity of an M.smegmatis knockout of the same operon. This chain is Lipoarabinomannan carrier protein LprG, found in Mycolicibacterium hassiacum (strain DSM 44199 / CIP 105218 / JCM 12690 / 3849) (Mycobacterium hassiacum).